We begin with the raw amino-acid sequence, 312 residues long: Putative HTH-type transcriptional regulatory protein TV0294 (312 aa).

The region spanning 133–186 (LRERRNELNLSIGNISSYLGVSRRSVSLYENGSAATIDIFIRLRNILKADIVDH) is the HTH cro/C1-type domain. Positions 144 to 163 (IGNISSYLGVSRRSVSLYEN) form a DNA-binding region, H-T-H motif.

The chain is Putative HTH-type transcriptional regulatory protein TV0294 from Thermoplasma volcanium (strain ATCC 51530 / DSM 4299 / JCM 9571 / NBRC 15438 / GSS1).